The chain runs to 104 residues: MERVASIMYLYPGNKEEYKKRHDELWPEMKEALKAHGAANYSIFLDEKTDTLFAYVEVEDKAIYDKIAETEICQKWWKYMAPIMKSNPNNSPVAVDLKEVFYLA.

Tyrosine 18 contacts substrate. Histidine 22 (proton donor) is an active-site residue. Substrate is bound by residues tyrosine 41 and 76 to 77 (WW).

Belongs to the rhamnose mutarotase family. In terms of assembly, homodimer.

The protein resides in the cytoplasm. It catalyses the reaction alpha-L-rhamnose = beta-L-rhamnose. The protein operates within carbohydrate metabolism; L-rhamnose metabolism. In terms of biological role, involved in the anomeric conversion of L-rhamnose. This Listeria monocytogenes serovar 1/2a (strain ATCC BAA-679 / EGD-e) protein is L-rhamnose mutarotase.